We begin with the raw amino-acid sequence, 201 residues long: Musculin (201 aa).

2 disordered regions span residues 1-108 and 182-201; these read MSTG…NAAN and RPDS…GTSA. The segment covering 46-56 has biased composition (acidic residues); that stretch reads SAEEEDGEEEP. The Nuclear localization signal motif lies at 66–71; it reads KRKRLR. The segment covering 74–86 has biased composition (gly residues); that stretch reads DAGGAGGRAGGAG. The bHLH domain maps to 102–154; the sequence is SQRNAANARERARMRVLSKAFSRLKTSLPWVPPDTKLSKLDTLRLASSYIAHL.

As to quaternary structure, efficient DNA binding requires dimerization with another bHLH protein. Binds DNA as a homodimer or a heterodimer. Forms a heterodimer with TCF3.

It is found in the nucleus. Functionally, transcription repressor that blocks myogenesis and activation of E-box dependent muscle genes. In Mus musculus (Mouse), this protein is Musculin (Msc).